The chain runs to 843 residues: MSIQEKSKENSSIVTKESEDENLEEEVESSQNSPTKKSGSKEAVKTPVRFSNKSKTNESEFGMRMSTRSASCSADKTATNSFNKNTVTLKGQSQESSKTKKLCQEKLSLGILKGNEQLHRRSQRLQQLTECTTRSLRSREIHGQIQTVKQNQQSARREQCNSTQSKCNKVKVNQKHVKRKVLEIKSDCKEDRHSVTNEVINSPKGKKRKVQHQTTSTCSSQCNQGSEKCLQKTSRKEEIKPVPVTADIRKLKAATSVVSKKNELRKSAHTQVSTSTKRPQIPLPLVPEHSDDQELEQAGKSKRGSILQLCEEIAGEIESDTVEVKKESSCVESVKEEKPAEVKLQGTDAERQILHHKEANQDVRSNRFFPSRKTKPVKCVLNGINSSTKKNSNWTKIKLSKFNSVQQHKLDSQVSPKLNLLQTGLSTSVLEMPHPVSQSTFLEMKAHGNVTCQRDKMKGIKSEEVKINNIAIEINKATKRDPGNCNLDNHIKPSPDSSLDNQMKLSCESAPDQNFSICSASEVETNPLENTAAASTLLSQAKIDEDRTFPGSAPNQQHSVLSDEASINRKNRDVPPNHSQLKHDSHLEITIPKSLKLKDSEKVDEKQLVIDAGHKRFGAVSCNICGMLYTASNPEDETQHLLFHNQFISAVKYVGWKKERILAEYPDGRIIMVLPEDPKYALKKVDEIREMVDNDLGFQQAPLMCYSRTKTLLFISNDKKVVGCLIAEHIQWGYRVIEEKLPVIRSEEEKVRFERQKAWCCSTLPEPAICGISRIWVFSMMRRKKIASRMIECLRSNFIYGSYLSKEEIAFSDPTPDGKLFATQYCGTGQFLVYNFINGQNTT.

The tract at residues 1–78 is disordered; it reads MSIQEKSKEN…SASCSADKTA (78 aa). The segment covering 18 to 28 has biased composition (acidic residues); sequence SEDENLEEEVE. Residues 66–78 are compositionally biased toward polar residues; it reads STRSASCSADKTA. Ser-202 is modified (phosphoserine). The segment at 262 to 300 is disordered; the sequence is NELRKSAHTQVSTSTKRPQIPLPLVPEHSDDQELEQAGK. Positions 269–278 are enriched in polar residues; it reads HTQVSTSTKR. A Glycyl lysine isopeptide (Lys-Gly) (interchain with G-Cter in SUMO2) cross-link involves residue Lys-335. Position 415 is a phosphoserine (Ser-415). The tract at residues 546–584 is disordered; that stretch reads DRTFPGSAPNQQHSVLSDEASINRKNRDVPPNHSQLKHD. Residues 566–584 show a composition bias toward basic and acidic residues; it reads SINRKNRDVPPNHSQLKHD. The segment at 620-644 adopts a CCHH-type zinc-finger fold; sequence VSCNICGMLYTASNPEDETQHLLFH. Acetyl-CoA-binding positions include 775-777, 783-788, and 815-817; these read IWV, RKKIAS, and TPD.

Belongs to the acetyltransferase family. ECO subfamily. As to quaternary structure, the subunit structure is controversial. Monomer. Homodimer. In terms of processing, phosphorylated during mitosis.

The protein localises to the nucleus. It localises to the chromosome. The enzyme catalyses L-lysyl-[protein] + acetyl-CoA = N(6)-acetyl-L-lysyl-[protein] + CoA + H(+). Acetyltransferase required for the establishment of sister chromatid cohesion. Couples the processes of cohesion and DNA replication to ensure that only sister chromatids become paired together. In contrast to the structural cohesins, the deposition and establishment factors are required only during S phase. Acts by mediating the acetylation of cohesin component SMC3. The sequence is that of N-acetyltransferase ESCO1 (Esco1) from Mus musculus (Mouse).